Reading from the N-terminus, the 191-residue chain is Flagellar transcriptional regulator FlhC (191 aa).

Positions 139, 142, 159, and 162 each coordinate Zn(2+).

The protein belongs to the FlhC family. Heterohexamer composed of two FlhC and four FlhD subunits. Each FlhC binds a FlhD dimer, forming a heterotrimer, and a hexamer assembles by dimerization of two heterotrimers. Zn(2+) serves as cofactor.

It is found in the cytoplasm. Its function is as follows. Functions in complex with FlhD as a master transcriptional regulator that regulates transcription of several flagellar and non-flagellar operons by binding to their promoter region. Activates expression of class 2 flagellar genes, including fliA, which is a flagellum-specific sigma factor that turns on the class 3 genes. Also regulates genes whose products function in a variety of physiological pathways. In Enterobacter cloacae subsp. cloacae (strain ATCC 13047 / DSM 30054 / NBRC 13535 / NCTC 10005 / WDCM 00083 / NCDC 279-56), this protein is Flagellar transcriptional regulator FlhC.